Reading from the N-terminus, the 111-residue chain is Resistin-like alpha (111 aa).

The first 23 residues, 1 to 23, serve as a signal peptide directing secretion; sequence MKTTTCSLLICISLLQLMVPVNT. 5 disulfides stabilise this stretch: Cys-55–Cys-108, Cys-67–Cys-107, Cys-76–Cys-93, Cys-78–Cys-95, and Cys-82–Cys-97.

The protein belongs to the resistin/FIZZ family. As to quaternary structure, monomer. Highest levels in adipose tissue.

It is found in the secreted. In terms of biological role, probable hormone. Plays a role in pulmonary vascular remodeling. The sequence is that of Resistin-like alpha (Retnla) from Mus musculus (Mouse).